A 574-amino-acid chain; its full sequence is Proline--tRNA ligase (574 aa).

This sequence belongs to the class-II aminoacyl-tRNA synthetase family. ProS type 1 subfamily. In terms of assembly, homodimer.

Its subcellular location is the cytoplasm. The catalysed reaction is tRNA(Pro) + L-proline + ATP = L-prolyl-tRNA(Pro) + AMP + diphosphate. Its function is as follows. Catalyzes the attachment of proline to tRNA(Pro) in a two-step reaction: proline is first activated by ATP to form Pro-AMP and then transferred to the acceptor end of tRNA(Pro). As ProRS can inadvertently accommodate and process non-cognate amino acids such as alanine and cysteine, to avoid such errors it has two additional distinct editing activities against alanine. One activity is designated as 'pretransfer' editing and involves the tRNA(Pro)-independent hydrolysis of activated Ala-AMP. The other activity is designated 'posttransfer' editing and involves deacylation of mischarged Ala-tRNA(Pro). The misacylated Cys-tRNA(Pro) is not edited by ProRS. In Pseudoalteromonas translucida (strain TAC 125), this protein is Proline--tRNA ligase.